A 232-amino-acid chain; its full sequence is Large ribosomal subunit protein uL1 (232 aa).

Belongs to the universal ribosomal protein uL1 family. In terms of assembly, part of the 50S ribosomal subunit.

Functionally, binds directly to 23S rRNA. The L1 stalk is quite mobile in the ribosome, and is involved in E site tRNA release. Protein L1 is also a translational repressor protein, it controls the translation of the L11 operon by binding to its mRNA. This chain is Large ribosomal subunit protein uL1, found in Methylobacterium radiotolerans (strain ATCC 27329 / DSM 1819 / JCM 2831 / NBRC 15690 / NCIMB 10815 / 0-1).